We begin with the raw amino-acid sequence, 708 residues long: Soluble guanylate cyclase gcy-37 (708 aa).

His-105 contributes to the heme binding site. Residues 368–409 (LNQSRICQMELNKKLEETMKKMKKMTEELEVKKSQTDRLLFE) are a coiled coil. Residues 434–562 (SVIFTDIPDF…NTVNVTKSIC (129 aa)) form the Guanylate cyclase domain. Residues Asp-439 and Asp-483 each coordinate Mg(2+).

This sequence belongs to the adenylyl cyclase class-4/guanylyl cyclase family. In terms of assembly, heterodimer; with other soluble guanylate cyclases. Requires heme as cofactor. Expressed in a small number of neurons, corresponding to URX, AQR and PQR neurons.

It localises to the cytoplasm. It carries out the reaction GTP = 3',5'-cyclic GMP + diphosphate. Its activity is regulated as follows. May be regulated by molecular oxygen. Probably not activated by nitric oxide (NO). Its function is as follows. Synthesizes cyclic GMP (cGMP) from GTP. May play a role in sensory neurons. This chain is Soluble guanylate cyclase gcy-37 (gcy-37), found in Caenorhabditis elegans.